Reading from the N-terminus, the 281-residue chain is BURP domain-containing protein BNM2C (281 aa).

Residues 1–25 form the signal peptide; that stretch reads MASLRFSVTFPALFSLLLSLWVVDA. Residues 59–281 form the BURP domain; that stretch reads FFKISDLKLG…PLDNIVWVSK (223 aa).

Expressed in the radicle of germinating seeds 2 days post-imbibition (DPI) and in roots of 30-DPI young plants. Expressed in the embryo and seed coat tissues of developing seeds. The protein accumulates only in seeds and only long after transcript accumulation becomes evident.

The protein localises to the protein storage vacuole. The sequence is that of BURP domain-containing protein BNM2C from Brassica napus (Rape).